Reading from the N-terminus, the 359-residue chain is UDP-N-acetylglucosamine--N-acetylmuramyl-(pentapeptide) pyrophosphoryl-undecaprenol N-acetylglucosamine transferase (359 aa).

UDP-N-acetyl-alpha-D-glucosamine is bound by residues 15 to 17 (TGG), Asn127, Arg166, Ser191, Ile245, 264 to 269 (ALTVSE), and Gln290.

Belongs to the glycosyltransferase 28 family. MurG subfamily.

It is found in the cell inner membrane. The enzyme catalyses di-trans,octa-cis-undecaprenyl diphospho-N-acetyl-alpha-D-muramoyl-L-alanyl-D-glutamyl-meso-2,6-diaminopimeloyl-D-alanyl-D-alanine + UDP-N-acetyl-alpha-D-glucosamine = di-trans,octa-cis-undecaprenyl diphospho-[N-acetyl-alpha-D-glucosaminyl-(1-&gt;4)]-N-acetyl-alpha-D-muramoyl-L-alanyl-D-glutamyl-meso-2,6-diaminopimeloyl-D-alanyl-D-alanine + UDP + H(+). It participates in cell wall biogenesis; peptidoglycan biosynthesis. Functionally, cell wall formation. Catalyzes the transfer of a GlcNAc subunit on undecaprenyl-pyrophosphoryl-MurNAc-pentapeptide (lipid intermediate I) to form undecaprenyl-pyrophosphoryl-MurNAc-(pentapeptide)GlcNAc (lipid intermediate II). This chain is UDP-N-acetylglucosamine--N-acetylmuramyl-(pentapeptide) pyrophosphoryl-undecaprenol N-acetylglucosamine transferase, found in Pseudomonas entomophila (strain L48).